A 366-amino-acid polypeptide reads, in one-letter code: MEPQLNQEVINTAALHDGPIETDAVIVGAGPVGLFQVFELGLLEIKAHIIDSLAYPGGQPIELYPDKPIYDIPAIPVCTGKELTDNLMKQIEPFGPTFHLGQEVSVLEKQEDGRFFVETSKGTKFLTKTIFIAAGVGAFQPKLLRVDGLDKFDNSQLFYRVKNPADFAGKNLIIVGGGDSALDWALNFVAEGPNKAESVILIHRRDGFKAAPANVAKMKELCDAYEMQFIIGQVTGYDEKEGRLTAAKVTGADGITRVVPLDVMLVFFGLSPKLGPIAHWGLDIERKQIKVDTEKFSTNIPGIFAVGDINTYPGKKKLILSGFHECALAAFGAAPFIFPDKKIHLQYTTTSPKLHKVLGVESPVFD.

FAD-binding residues include D51, Q59, Y64, V104, F139, D308, and T349.

It belongs to the ferredoxin--NADP reductase type 2 family. As to quaternary structure, homodimer. The cofactor is FAD.

The catalysed reaction is 2 reduced [2Fe-2S]-[ferredoxin] + NADP(+) + H(+) = 2 oxidized [2Fe-2S]-[ferredoxin] + NADPH. The protein is Ferredoxin--NADP reductase of Polaromonas naphthalenivorans (strain CJ2).